Reading from the N-terminus, the 119-residue chain is Putative membrane protein insertion efficiency factor (119 aa).

The protein belongs to the UPF0161 family.

It localises to the cell inner membrane. Could be involved in insertion of integral membrane proteins into the membrane. The chain is Putative membrane protein insertion efficiency factor from Brucella anthropi (strain ATCC 49188 / DSM 6882 / CCUG 24695 / JCM 21032 / LMG 3331 / NBRC 15819 / NCTC 12168 / Alc 37) (Ochrobactrum anthropi).